The chain runs to 436 residues: GTPase Der (436 aa).

EngA-type G domains lie at proline 4–glutamate 167 and isoleucine 175–asparagine 351. Residues glycine 10–serine 17, aspartate 57–isoleucine 61, asparagine 119–aspartate 122, glycine 181–serine 188, aspartate 229–methionine 233, and asparagine 294–aspartate 297 contribute to the GTP site. Residues lysine 352–lysine 436 form the KH-like domain.

The protein belongs to the TRAFAC class TrmE-Era-EngA-EngB-Septin-like GTPase superfamily. EngA (Der) GTPase family. Associates with the 50S ribosomal subunit.

Its function is as follows. GTPase that plays an essential role in the late steps of ribosome biogenesis. The chain is GTPase Der from Streptococcus agalactiae serotype III (strain NEM316).